A 208-amino-acid chain; its full sequence is ATP-dependent Clp protease proteolytic subunit (208 aa).

The active-site Nucleophile is Ser105. His130 is a catalytic residue.

It belongs to the peptidase S14 family. In terms of assembly, fourteen ClpP subunits assemble into 2 heptameric rings which stack back to back to give a disk-like structure with a central cavity, resembling the structure of eukaryotic proteasomes.

The protein localises to the cytoplasm. The enzyme catalyses Hydrolysis of proteins to small peptides in the presence of ATP and magnesium. alpha-casein is the usual test substrate. In the absence of ATP, only oligopeptides shorter than five residues are hydrolyzed (such as succinyl-Leu-Tyr-|-NHMec, and Leu-Tyr-Leu-|-Tyr-Trp, in which cleavage of the -Tyr-|-Leu- and -Tyr-|-Trp bonds also occurs).. Cleaves peptides in various proteins in a process that requires ATP hydrolysis. Has a chymotrypsin-like activity. Plays a major role in the degradation of misfolded proteins. This chain is ATP-dependent Clp protease proteolytic subunit, found in Xanthomonas axonopodis pv. citri (strain 306).